A 513-amino-acid chain; its full sequence is 2-isopropylmalate synthase (513 aa).

The Pyruvate carboxyltransferase domain occupies 5–267 (LVIFDTTLRD…ETRIDTTQIV (263 aa)). Mn(2+)-binding residues include D14, H202, H204, and N238. The interval 393 to 513 (KLVYSRVCSE…LDKVKAQGGV (121 aa)) is regulatory domain.

This sequence belongs to the alpha-IPM synthase/homocitrate synthase family. LeuA type 1 subfamily. As to quaternary structure, homodimer. It depends on Mn(2+) as a cofactor.

Its subcellular location is the cytoplasm. It catalyses the reaction 3-methyl-2-oxobutanoate + acetyl-CoA + H2O = (2S)-2-isopropylmalate + CoA + H(+). It participates in amino-acid biosynthesis; L-leucine biosynthesis; L-leucine from 3-methyl-2-oxobutanoate: step 1/4. In terms of biological role, catalyzes the condensation of the acetyl group of acetyl-CoA with 3-methyl-2-oxobutanoate (2-ketoisovalerate) to form 3-carboxy-3-hydroxy-4-methylpentanoate (2-isopropylmalate). In Dechloromonas aromatica (strain RCB), this protein is 2-isopropylmalate synthase.